We begin with the raw amino-acid sequence, 258 residues long: 5'-nucleotidase SurE (258 aa).

4 residues coordinate a divalent metal cation: Asp9, Asp10, Ser42, and Asn96.

Belongs to the SurE nucleotidase family. It depends on a divalent metal cation as a cofactor.

The protein resides in the cytoplasm. The catalysed reaction is a ribonucleoside 5'-phosphate + H2O = a ribonucleoside + phosphate. In terms of biological role, nucleotidase that shows phosphatase activity on nucleoside 5'-monophosphates. The chain is 5'-nucleotidase SurE from Campylobacter jejuni subsp. doylei (strain ATCC BAA-1458 / RM4099 / 269.97).